Here is a 334-residue protein sequence, read N- to C-terminus: Heat shock factor 2-binding protein (334 aa).

An interaction with BRME1 region spans residues 14–51 (MGTKEEFVKVRKKDLERLTTEVMQIRDFLPRILNGEVL). A coiled-coil region spans residues 49–122 (EVLESFQKLK…LLQQAEYCTE (74 aa)). Positions 83 to 334 (ARLETVQADN…EDLRTLEHNV (252 aa)) are interaction with BRCA2.

Associates with HSF2. The interaction seems to occur between the trimerization domain of HSF2 and the N-terminal hydrophilic region of HSF2BP. Interacts (via C-terminus) with BNC1. Interacts (via N-terminus) with BRCA2 and BRME1; the interactions are direct and allow the formation of a ternary complex. The complex BRME1:HSF2BP:BRCA2 interacts with SPATA22, MEIOB and RAD51. Post-translationally, sumoylated by UBE2I in response to MEKK1-mediated stimuli. Testis specific. Overexpressed in some tumors.

Its subcellular location is the cytoplasm. It is found in the chromosome. Meiotic recombination factor component of recombination bridges involved in meiotic double-strand break repair. Modulates the localization of recombinases DMC1:RAD51 to meiotic double-strand break (DSB) sites through the interaction with BRCA2 and its recruitment during meiotic recombination. Indispensable for the DSB repair, homologous synapsis, and crossover formation that are needed for progression past metaphase I, is essential for spermatogenesis and male fertility. Required for proper recombinase recruitment in female meiosis. Inhibits BNC1 transcriptional activity during spermatogenesis, probably by sequestering it in the cytoplasm. May be involved in modulating HSF2 activation in testis. The sequence is that of Heat shock factor 2-binding protein from Homo sapiens (Human).